Consider the following 1380-residue polypeptide: MAYSFTEKKRIRKDFGKLPKVMEVPYLLAIQLDSYRKFLQQDKSAEERLEEGLEAAFRSVFPIASYSGNAALEYAGYEFGKPVFDVKECIIRGTTYAAPLRVRIRLVIYDRESSGAIKDIREQQVYMGEIPLMTENGTFVINGTERVIVSQLHRSPGVFFDHDKGKTHSSGKLLYSARVIPYRGSWLDFEFDPKDQVFVRIDRRRKLPATILLRALGYTSDEVLEMFFDTNEIAVEDGIYRMKLVPERLRGETATFDILADGEVVVERGRRITARHIRQLEKANIEYLDIPAEYLQGKYLAKSIIDQDTGEILVECNTELTAETLEKLEQGGITDFETLYTNDLDNGPFMADTLRADPTRTPLEALVEIYRMMRPGEPPTKEAAENLFKNLFFTDERYDLSTVGRMKFNRRLGREDETGPGILYDGRYFSARSDEEGKQYFEQMGGETSDIIDVLRTLVDIRNGNGVVDDIDHLGNRRVRSVGEMAENQFRVGLVRVERAVKERLSLAESEGLMPQDLINSKPVAAAVKEFFGSSQLSQFMDQNNPLSEITHKRRVSALGPGGLTRERAGFEVRDVHPTHYGRVCPIETPEGPNIGLINSLATYARANEYGFLESPYLKVIDGKVSEEIEYLSAIEEAECVIAQVDAKMTEEGGFEEDFVTVRHRYEFTVMERDTITHMDVSPRQVVSVAASLIPFLEHDDANRALMGSNMQRQAVPTLRADKPLVGTGFERHVARDSGVCVVATRGGIVDKVDASRIIVKVNDDEVSEGEAGVDIYNLTKYTRSNQNTCINQRPLVKVGDRVAARDIMADGPSVDMGELALGQNMRVAFMPWNGYNFEDSILISEKVVKDDRFTSIHIQELTCIARDTKLGPEEITADIPNVGEAALSKLDESGIVYIGAEVEAGDILVGKVTPKGETQLTPEEKLLRAIFGEKASDVKDTSQRVSSGVKGTIIDVQVFTRDGVEKDERARQIEQAALEQFRKDLKDEYRILELDILERLRAVMVGKKVNGGAGFKRGTEMTGEILDGLDAEKWFELRPADDDVAEQLERAQQYLEQHKKEQDERYKDKQAKISGGDDLAHGVLKVVKVYLAIKRRIQPGDKMAGRHGNKGVISVIMPEEDMPHDENGVPVDVVLNPLGVPSRMNVGQILETHLGWAAKGLGERIGEMLAEQKKIADIRVFLDKIYNQAGAGGTPEDLDSFSDDEIIELAKNLVGGVPMATAVFDGAKEFEIKELLELAGHDRSGQVQLWDGRTGEAFDRKVTVGYMYMLKLNHLVDDKMHARSTGSYSLVTQQPLGGKAQFGGQRFGEMEVWALEAYGAAYTLQEMLTVKSDDVNGRTRVYKNIVDGDHRMDPGMPESFNVLLKEIRSLGINIELEND.

The protein belongs to the RNA polymerase beta chain family. In terms of assembly, the RNAP catalytic core consists of 2 alpha, 1 beta, 1 beta' and 1 omega subunit. When a sigma factor is associated with the core the holoenzyme is formed, which can initiate transcription.

The enzyme catalyses RNA(n) + a ribonucleoside 5'-triphosphate = RNA(n+1) + diphosphate. Functionally, DNA-dependent RNA polymerase catalyzes the transcription of DNA into RNA using the four ribonucleoside triphosphates as substrates. The protein is DNA-directed RNA polymerase subunit beta of Alcanivorax borkumensis (strain ATCC 700651 / DSM 11573 / NCIMB 13689 / SK2).